The chain runs to 353 residues: 3'-5' exonuclease (353 aa).

The tract at residues 1–119 (MEKYLTKMPI…PSPEKEKPEK (119 aa)) is disordered. 2 stretches are compositionally biased toward basic and acidic residues: residues 13 to 30 (KANE…ETPK) and 37 to 50 (KKDT…KENA). The segment covering 59 to 70 (TKGRPGRPAAKR) has biased composition (basic residues). Residues 71-90 (KNLDTPDVTEKLAMEEENPP) show a composition bias toward basic and acidic residues. Phosphoserine occurs at positions 103, 109, and 111. The 169-residue stretch at 145 to 313 (VLQWVEKQKD…GQVIYRELER (169 aa)) folds into the 3'-5' exonuclease domain. Mg(2+)-binding residues include D162, E164, and D300.

The protein belongs to the WRNexo family.

It is found in the nucleus. Functionally, has exonuclease activity on both single-stranded and duplex templates bearing overhangs, but not blunt ended duplex DNA, and cleaves in a 3'-5' direction. Essential for the formation of DNA replication focal centers. Has an important role in maintaining genome stability. The protein is 3'-5' exonuclease of Drosophila melanogaster (Fruit fly).